The primary structure comprises 640 residues: uncharacterized protein (640 aa).

A run of 14 helical transmembrane segments spans residues Gly8–Phe28, Leu52–Ile72, Leu90–Ala110, Leu136–Leu156, Val179–Trp199, Pro208–Val228, Trp241–Ala261, Glu277–Ala297, Tyr298–Phe318, Thr352–Val372, Ile391–Val411, Ala446–Val466, Ile497–Ala517, and Gly619–Ala639.

It belongs to the complex I subunit 4 family.

The protein resides in the cell membrane. This is an uncharacterized protein from Mycobacterium tuberculosis (strain CDC 1551 / Oshkosh).